The primary structure comprises 283 residues: Phosphatidylglycerol--prolipoprotein diacylglyceryl transferase (283 aa).

7 helical membrane passes run 21–41 (LAVRWYGLMYLFGFMFALWLA), 60–80 (LLFAGFLGVVIGGRVGYVLFY), 95–115 (VWTGGMSFHGGLLGVISAMLW), 124–144 (FFTIADFVAPLVPFGLGAGRL), 176–196 (SQLYEFALEGVVLFFILNWFI), 203–223 (GAVSGLFLFGYGTFRFLVEYV), and 239–259 (MGQILSLPMVIGGLLMMLWAF). A 1,2-diacyl-sn-glycero-3-phospho-(1'-sn-glycerol) is bound at residue arginine 143.

Belongs to the Lgt family.

It localises to the cell inner membrane. The enzyme catalyses L-cysteinyl-[prolipoprotein] + a 1,2-diacyl-sn-glycero-3-phospho-(1'-sn-glycerol) = an S-1,2-diacyl-sn-glyceryl-L-cysteinyl-[prolipoprotein] + sn-glycerol 1-phosphate + H(+). The protein operates within protein modification; lipoprotein biosynthesis (diacylglyceryl transfer). In terms of biological role, catalyzes the transfer of the diacylglyceryl group from phosphatidylglycerol to the sulfhydryl group of the N-terminal cysteine of a prolipoprotein, the first step in the formation of mature lipoproteins. This chain is Phosphatidylglycerol--prolipoprotein diacylglyceryl transferase, found in Aliivibrio fischeri (strain MJ11) (Vibrio fischeri).